We begin with the raw amino-acid sequence, 429 residues long: Ribosomal RNA small subunit methyltransferase B (429 aa).

S-adenosyl-L-methionine is bound by residues 254–260 (CAAPGGK), aspartate 277, aspartate 303, and aspartate 322. Residue cysteine 375 is the Nucleophile of the active site.

The protein belongs to the class I-like SAM-binding methyltransferase superfamily. RsmB/NOP family.

It localises to the cytoplasm. The catalysed reaction is cytidine(967) in 16S rRNA + S-adenosyl-L-methionine = 5-methylcytidine(967) in 16S rRNA + S-adenosyl-L-homocysteine + H(+). Functionally, specifically methylates the cytosine at position 967 (m5C967) of 16S rRNA. This is Ribosomal RNA small subunit methyltransferase B from Shigella boydii serotype 4 (strain Sb227).